A 529-amino-acid chain; its full sequence is Bifunctional purine biosynthesis protein PurH (529 aa).

Residues 1 to 148 enclose the MGS-like domain; sequence MQQRRPVRRA…KNHKDVAIVV (148 aa).

Belongs to the PurH family.

The catalysed reaction is (6R)-10-formyltetrahydrofolate + 5-amino-1-(5-phospho-beta-D-ribosyl)imidazole-4-carboxamide = 5-formamido-1-(5-phospho-D-ribosyl)imidazole-4-carboxamide + (6S)-5,6,7,8-tetrahydrofolate. It catalyses the reaction IMP + H2O = 5-formamido-1-(5-phospho-D-ribosyl)imidazole-4-carboxamide. It participates in purine metabolism; IMP biosynthesis via de novo pathway; 5-formamido-1-(5-phospho-D-ribosyl)imidazole-4-carboxamide from 5-amino-1-(5-phospho-D-ribosyl)imidazole-4-carboxamide (10-formyl THF route): step 1/1. Its pathway is purine metabolism; IMP biosynthesis via de novo pathway; IMP from 5-formamido-1-(5-phospho-D-ribosyl)imidazole-4-carboxamide: step 1/1. This Salmonella enteritidis PT4 (strain P125109) protein is Bifunctional purine biosynthesis protein PurH.